A 591-amino-acid polypeptide reads, in one-letter code: CTP synthase 1-A (591 aa).

One can recognise a Glutamine amidotransferase type-1 domain in the interval 300–554 (SIALVGKYTK…LASVGRLSQY (255 aa)). Active-site for GATase activity residues include Cys399, His526, and Glu528.

Belongs to the CTP synthase family.

The catalysed reaction is UTP + L-glutamine + ATP + H2O = CTP + L-glutamate + ADP + phosphate + 2 H(+). Its pathway is pyrimidine metabolism; CTP biosynthesis via de novo pathway; CTP from UDP: step 2/2. In terms of biological role, this enzyme is involved in the de novo synthesis of CTP, a precursor of DNA, RNA and phospholipids. Catalyzes the ATP-dependent amination of UTP to CTP with either L-glutamine or ammonia as a source of nitrogen. This Xenopus laevis (African clawed frog) protein is CTP synthase 1-A (ctps1-a).